A 69-amino-acid chain; its full sequence is Small integral membrane protein 20 (69 aa).

The Mitochondrial matrix segment spans residues 1–8 (MAAARNLR). A helical transmembrane segment spans residues 9–29 (TALIFGGFISMVGAAFYPIYF). Topologically, residues 30-69 (RPLLRLEEYQKEQAVNRAGIVQEDVQPPGLKVWSDPFGRK) are mitochondrial intermembrane. The residue at position 66 (phenylalanine 66) is a Phenylalanine amide.

Component of the MITRAC (mitochondrial translation regulation assembly intermediate of cytochrome c oxidase complex) complex, the core components of this complex being Coa3/Mitrac12 and Cox14. Interacts with Coa3/Mitrac12 and Cox4i1. Directly interacts with newly synthesized Mt-Co1/Cox1. In terms of tissue distribution, highly expressed in the hypothalamus, substantia nigra reticulata, Edinger-Westphal nucleus, and nucleus of the solitary tract/dorsal motor nucleus of the vagus, the spinal cord, and sensory ganglia (at protein level). Also expressed in the heart, thymus, esophagus, stomach, spleen, lung, pituitary gland, kidney, jejunum, duodenum, ileum, cerebrum, pons, and colon (at protein level). Expressed in preadipocytes and apidocytes (at protein level). Expressed in pancreatic islet cells (at protein level).

It is found in the mitochondrion inner membrane. The protein localises to the secreted. Its function is as follows. Component of the MITRAC (mitochondrial translation regulation assembly intermediate of cytochrome c oxidase complex) complex, that regulates cytochrome c oxidase assembly. Promotes the progression of complex assembly after the association of Mt-Co1/Cox11 with Cox4I1 and Cox6c. Chaperone-like assembly factor required to stabilize newly synthesized Mt-Co1/Cox1 and to prevent its premature turnover. Peptide involved in a broad spectrum of regulatory functions. Is a ligand for GPR173. As part of the reproductive cycle, it regulates gonadotropin-releasing hormone (GnRH) signaling in the hypothalamus and pituitary gland which augments the release of luteinizing hormone. More specifically, it regulates the expression of transcription factors CEBPB and POU2F1/OCT1 through the cAMP-PKA signaling pathway, which subsequently regulate the expression of GNRHR and KISS1. Plays a protective role in memory retention through activation of GNRHR. Regulates the secretion of AVP by hypothalamic neurons. Plays a role in the transduction of the itch sensation. Induces anxiolytic effects, reducing behavior associated with anxiety. Regulates food intake as well as satiation and satiety by increasing NUCB2 expression in neurons. In the ovary, it regulates follicular growth by stimulating granulosa cell proliferation by increasing the expression of GPR173, CREB1, CYP19A1, KITLG, FSHR, and LHCGR. It also increases the production of estradiol (E2). In the heart, it regulates contractility and relaxation by activating the AKT1-NOS3 and MAPK1-MAPK3 signaling pathways. It also plays a cardioprotective role during ischemia, where it activates the SAFE and RISK pathways. Stimulates the proliferation and differentiation of preadipocytes. In pancreatic islet cells, it induces proliferation of islet cells as well as the production of INS1 and INS2 through activation of the MAPK1-MAPK3 signaling pathways. This is Small integral membrane protein 20 from Rattus norvegicus (Rat).